A 448-amino-acid chain; its full sequence is N-succinylarginine dihydrolase (448 aa).

Substrate contacts are provided by residues 19–28 (GGLSYGNVAS), Asn110, and 137–138 (HR). Glu174 is a catalytic residue. Position 214 (Arg214) interacts with substrate. Residue His250 is part of the active site. Substrate-binding residues include Asp252 and Asn365. Cys371 acts as the Nucleophile in catalysis.

The protein belongs to the succinylarginine dihydrolase family. As to quaternary structure, homodimer.

The catalysed reaction is N(2)-succinyl-L-arginine + 2 H2O + 2 H(+) = N(2)-succinyl-L-ornithine + 2 NH4(+) + CO2. It participates in amino-acid degradation; L-arginine degradation via AST pathway; L-glutamate and succinate from L-arginine: step 2/5. Functionally, catalyzes the hydrolysis of N(2)-succinylarginine into N(2)-succinylornithine, ammonia and CO(2). The chain is N-succinylarginine dihydrolase from Pseudomonas fluorescens (strain SBW25).